We begin with the raw amino-acid sequence, 305 residues long: Heat stress transcription factor B-4d (305 aa).

The tract at residues 201–230 is hydrophobic repeat HR-A/B; that stretch reads LRRRNSLLLSELAHMRKLYNDIIYFLQNHV. Positions 286–289 match the Nuclear localization signal motif; it reads KKRR. Residues 286 to 305 form a disordered region; it reads KKRRVQLVQEDEGDEQGSEG. Acidic residues predominate over residues 294 to 305; that stretch reads QEDEGDEQGSEG.

Belongs to the HSF family. Class B subfamily. Homotrimer. Post-translationally, exhibits temperature-dependent phosphorylation.

Its subcellular location is the nucleus. In terms of biological role, transcriptional regulator that specifically binds DNA of heat shock promoter elements (HSE). The polypeptide is Heat stress transcription factor B-4d (HSFB4D) (Oryza sativa subsp. japonica (Rice)).